The chain runs to 347 residues: Methylthioribose-1-phosphate isomerase (347 aa).

Substrate-binding positions include 45-47 (RGA), arginine 88, and glutamine 197. Aspartate 238 serves as the catalytic Proton donor. Residue 248-249 (NK) coordinates substrate.

This sequence belongs to the eIF-2B alpha/beta/delta subunits family. MtnA subfamily.

The catalysed reaction is 5-(methylsulfanyl)-alpha-D-ribose 1-phosphate = 5-(methylsulfanyl)-D-ribulose 1-phosphate. The protein operates within amino-acid biosynthesis; L-methionine biosynthesis via salvage pathway; L-methionine from S-methyl-5-thio-alpha-D-ribose 1-phosphate: step 1/6. Its function is as follows. Catalyzes the interconversion of methylthioribose-1-phosphate (MTR-1-P) into methylthioribulose-1-phosphate (MTRu-1-P). The protein is Methylthioribose-1-phosphate isomerase of Trichormus variabilis (strain ATCC 29413 / PCC 7937) (Anabaena variabilis).